Here is a 397-residue protein sequence, read N- to C-terminus: Protein Brevis radix-like 1 (397 aa).

Disordered regions lie at residues 14–37 (GAPPLREQSDDADDAAVARGAGEC) and 105–148 (RAGS…EDDE). Positions 124-148 (AGDEEEEEEEEEEEGTTADGSEDDE) are enriched in acidic residues. Positions 150 to 205 (KEWVAQVEPGVLITFLSLPEGGNDLKRIRFSREIFNKWQAQRWWAENYEKVMELYN) constitute a BRX 1 domain. Disordered stretches follow at residues 212–278 (QTPL…QQHH) and 300–342 (SISG…DQER). Residues 220–230 (KSEDESLKEDI) are compositionally biased toward basic and acidic residues. Positions 309 to 320 (SSMDASMRSSSS) are enriched in low complexity. In terms of domain architecture, BRX 2 spans 342-397 (REWVEEDEPGVYITIRALPGGIRELRRVRFSREKFSEMHARLWWEENRARIHDQYL).

The protein belongs to the BRX family.

It is found in the nucleus. This chain is Protein Brevis radix-like 1 (BRXL1), found in Oryza sativa subsp. japonica (Rice).